The chain runs to 227 residues: Mitochondrial inner membrane protease ATP23 (227 aa).

Residue histidine 124 coordinates a divalent metal cation. Glutamate 125 is a catalytic residue. Residue histidine 128 coordinates a divalent metal cation.

This sequence belongs to the peptidase M76 family. As to quaternary structure, interacts with ATP6.

The protein resides in the mitochondrion inner membrane. Its function is as follows. Has a dual role in the assembly of mitochondrial ATPase. Acts as a protease that removes the N-terminal 10 residues of mitochondrial ATPase CF(0) subunit 6 (ATP6) at the intermembrane space side. Also involved in the correct assembly of the membrane-embedded ATPase CF(0) particle, probably mediating association of ATP6 with the subunit 9 ring. The chain is Mitochondrial inner membrane protease ATP23 (ATP23) from Saccharomyces cerevisiae (strain Lalvin EC1118 / Prise de mousse) (Baker's yeast).